The primary structure comprises 541 residues: Peptide chain release factor 3 (541 aa).

In terms of domain architecture, tr-type G spans 14 to 283; it reads EARRNFAIIS…AFLDYALKPG (270 aa). GTP-binding positions include 23–30, 91–95, and 145–148; these read SHPDAGKT, DTPGH, and NKLD.

This sequence belongs to the TRAFAC class translation factor GTPase superfamily. Classic translation factor GTPase family. PrfC subfamily.

The protein resides in the cytoplasm. Increases the formation of ribosomal termination complexes and stimulates activities of RF-1 and RF-2. It binds guanine nucleotides and has strong preference for UGA stop codons. It may interact directly with the ribosome. The stimulation of RF-1 and RF-2 is significantly reduced by GTP and GDP, but not by GMP. This Acaryochloris marina (strain MBIC 11017) protein is Peptide chain release factor 3.